The primary structure comprises 315 residues: DNA-directed RNA polymerase subunit alpha (315 aa).

The segment at 1-228 is alpha N-terminal domain (alpha-NTD); it reads MIEIEKPKIE…EHLNLFIDLS (228 aa). The segment at 245-315 is alpha C-terminal domain (alpha-CTD); that stretch reads KEKVLEMTIE…LGLSLAPSED (71 aa).

This sequence belongs to the RNA polymerase alpha chain family. In terms of assembly, homodimer. The RNAP catalytic core consists of 2 alpha, 1 beta, 1 beta' and 1 omega subunit. When a sigma factor is associated with the core the holoenzyme is formed, which can initiate transcription.

The catalysed reaction is RNA(n) + a ribonucleoside 5'-triphosphate = RNA(n+1) + diphosphate. In terms of biological role, DNA-dependent RNA polymerase catalyzes the transcription of DNA into RNA using the four ribonucleoside triphosphates as substrates. The chain is DNA-directed RNA polymerase subunit alpha from Acetivibrio thermocellus (strain ATCC 27405 / DSM 1237 / JCM 9322 / NBRC 103400 / NCIMB 10682 / NRRL B-4536 / VPI 7372) (Clostridium thermocellum).